The chain runs to 197 residues: Phospholipid hydroperoxide glutathione peroxidase (197 aa).

The residue at position 40 (Ser-40) is a Phosphoserine. Sec-73 is an active-site residue. Sec-73 is a non-standard amino acid (selenocysteine).

Belongs to the glutathione peroxidase family. Monomer. Has a tendency to form higher mass oligomers. Interacts with FUNDC1; this interaction promotes GPX4 recruitment into mitochondria through TOM/TIM complex where it is degraded by mitophagy.

It is found in the mitochondrion. The protein resides in the cytoplasm. The enzyme catalyses a hydroperoxy polyunsaturated fatty acid + 2 glutathione = a hydroxy polyunsaturated fatty acid + glutathione disulfide + H2O. It carries out the reaction (12S)-hydroperoxy-(5Z,8Z,10E,14Z)-eicosatetraenoate + 2 glutathione = (12S)-hydroxy-(5Z,8Z,10E,14Z)-eicosatetraenoate + glutathione disulfide + H2O. It catalyses the reaction (13S)-hydroperoxy-(9Z,11E)-octadecadienoate + 2 glutathione = (13S)-hydroxy-(9Z,11E)-octadecadienoate + glutathione disulfide + H2O. Functionally, essential antioxidant peroxidase that directly reduces phospholipid hydroperoxide even if they are incorporated in membranes and lipoproteins. Can also reduce fatty acid hydroperoxide, cholesterol hydroperoxide and thymine hydroperoxide. Plays a key role in protecting cells from oxidative damage by preventing membrane lipid peroxidation. Required to prevent cells from ferroptosis, a non-apoptotic cell death resulting from an iron-dependent accumulation of lipid reactive oxygen species. The presence of selenocysteine (Sec) versus Cys at the active site is essential for life: it provides resistance to overoxidation and prevents cells against ferroptosis. The presence of Sec at the active site is also essential for the survival of a specific type of parvalbumin-positive interneurons, thereby preventing against fatal epileptic seizures. May be required to protect cells from the toxicity of ingested lipid hydroperoxides. Required for normal sperm development and male fertility. Essential for maturation and survival of photoreceptor cells. Plays a role in a primary T-cell response to viral and parasitic infection by protecting T-cells from ferroptosis and by supporting T-cell expansion. Plays a role of glutathione peroxidase in platelets in the arachidonic acid metabolism. Reduces hydroperoxy ester lipids formed by a 15-lipoxygenase that may play a role as down-regulator of the cellular 15-lipoxygenase pathway. This is Phospholipid hydroperoxide glutathione peroxidase from Sapajus apella (Brown-capped capuchin).